The primary structure comprises 101 residues: Large ribosomal subunit protein uL24 (101 aa).

Belongs to the universal ribosomal protein uL24 family. In terms of assembly, part of the 50S ribosomal subunit.

In terms of biological role, one of two assembly initiator proteins, it binds directly to the 5'-end of the 23S rRNA, where it nucleates assembly of the 50S subunit. Its function is as follows. One of the proteins that surrounds the polypeptide exit tunnel on the outside of the subunit. This chain is Large ribosomal subunit protein uL24, found in Borrelia recurrentis (strain A1).